A 104-amino-acid polypeptide reads, in one-letter code: L-rhamnose mutarotase (104 aa).

Tyr18 serves as a coordination point for substrate. The Proton donor role is filled by His22. Substrate is bound by residues Tyr41 and Trp76–Trp77.

The protein belongs to the rhamnose mutarotase family. As to quaternary structure, homodimer.

The protein resides in the cytoplasm. The catalysed reaction is alpha-L-rhamnose = beta-L-rhamnose. Its pathway is carbohydrate metabolism; L-rhamnose metabolism. Involved in the anomeric conversion of L-rhamnose. This Shigella dysenteriae serotype 1 (strain Sd197) protein is L-rhamnose mutarotase.